Here is a 224-residue protein sequence, read N- to C-terminus: Oxaloacetate tautomerase FAHD2, mitochondrial (224 aa).

The transit peptide at 1 to 30 (MATSMIQRLFKQGTKIVGVGLNYASHAKEL) directs the protein to the mitochondrion. Mg(2+) is bound by residues E67, E69, and D98.

Belongs to the FAH family. Mg(2+) is required as a cofactor. Mn(2+) serves as cofactor.

It is found in the mitochondrion. The catalysed reaction is oxaloacetate = enol-oxaloacetate. Functionally, tautomerase that converts enol-oxaloacetate, a strong inhibitor of succinate dehydrogenase, to the physiological keto form of oxaloacetate. The protein is Oxaloacetate tautomerase FAHD2, mitochondrial of Arabidopsis thaliana (Mouse-ear cress).